Reading from the N-terminus, the 499-residue chain is Phenylalanine--tRNA ligase alpha subunit (499 aa).

L-phenylalanine is bound by residues threonine 330, glutamine 372–glutamate 374, and tyrosine 412. Glutamate 414 contacts Mg(2+). Phenylalanine 438 is a binding site for L-phenylalanine.

The protein belongs to the class-II aminoacyl-tRNA synthetase family. Phe-tRNA synthetase alpha subunit type 2 subfamily. Tetramer of two alpha and two beta subunits. Mg(2+) serves as cofactor.

The protein localises to the cytoplasm. The catalysed reaction is tRNA(Phe) + L-phenylalanine + ATP = L-phenylalanyl-tRNA(Phe) + AMP + diphosphate + H(+). The polypeptide is Phenylalanine--tRNA ligase alpha subunit (frs2) (Schizosaccharomyces pombe (strain 972 / ATCC 24843) (Fission yeast)).